The following is a 325-amino-acid chain: GMP reductase (325 aa).

Cysteine 173 functions as the Thioimidate intermediate in the catalytic mechanism. Position 202–225 (202–225 (IIADGGIHEHGDIAKSIRFGATMV)) interacts with NADP(+).

It belongs to the IMPDH/GMPR family. GuaC type 2 subfamily.

The enzyme catalyses IMP + NH4(+) + NADP(+) = GMP + NADPH + 2 H(+). In terms of biological role, catalyzes the irreversible NADPH-dependent deamination of GMP to IMP. It functions in the conversion of nucleobase, nucleoside and nucleotide derivatives of G to A nucleotides, and in maintaining the intracellular balance of A and G nucleotides. This chain is GMP reductase, found in Albidiferax ferrireducens (strain ATCC BAA-621 / DSM 15236 / T118) (Rhodoferax ferrireducens).